A 380-amino-acid chain; its full sequence is Guanine nucleotide-binding protein subunit beta (380 aa).

WD repeat units lie at residues Gly64–Asn94, Leu106–Asn136, Gly155–Asp186, Gly203–Asp234, Gly247–Asp277, Asn296–Asp326, and Ser342–Ala372.

It belongs to the WD repeat G protein beta family. In terms of assembly, g proteins are composed of 3 units, alpha, beta and gamma. Interacts with the gamma subunits RGG1 and RGG2.

The protein localises to the cell membrane. Functionally, guanine nucleotide-binding proteins (G proteins) are involved as modulators or transducers in various transmembrane signaling systems. The beta and gamma chains are required for the GTPase activity, for replacement of GDP by GTP, and for G protein-effector interaction. This is Guanine nucleotide-binding protein subunit beta from Oryza sativa subsp. japonica (Rice).